The primary structure comprises 440 residues: Glycerol-3-phosphate dehydrogenase [NAD(+)] 2, mitochondrial (440 aa).

The transit peptide at 1–16 directs the protein to the mitochondrion; the sequence is MLAVRRLTRYTFLKRT. 3 positions are modified to phosphoserine: Ser70, Ser72, and Ser75. NAD(+)-binding positions include 90 to 95, Phe122, and Phe178; that span reads GSGNWG. Residue Lys201 coordinates substrate. Ala234 lines the NAD(+) pocket. The active-site Proton acceptor is the Lys294. Arg359 and Gln388 together coordinate NAD(+). Substrate is bound at residue 359-360; that stretch reads RN.

It belongs to the NAD-dependent glycerol-3-phosphate dehydrogenase family.

The protein resides in the cytoplasm. It localises to the mitochondrion. The enzyme catalyses sn-glycerol 3-phosphate + NAD(+) = dihydroxyacetone phosphate + NADH + H(+). Catalyzes the production of glycerol under anaerobic growth conditions. Glycerol production serves as a redox sink by consuming the excess cytosolic NADH during anaerobic metabolism. This Saccharomyces cerevisiae (strain ATCC 204508 / S288c) (Baker's yeast) protein is Glycerol-3-phosphate dehydrogenase [NAD(+)] 2, mitochondrial.